A 2248-amino-acid polypeptide reads, in one-letter code: Putative Polycomb group protein ASXL3 (2248 aa).

An HTH HARE-type domain is found at 10-84; that stretch reads RTWAEAARLA…KSGLYALKKE (75 aa). Residues 156 to 232 are disordered; that stretch reads ALKQALRQQQ…GKQTSQHLKR (77 aa). Positions 203-216 are enriched in basic and acidic residues; the sequence is KNGEADSSDKEMKH. The segment covering 219–228 has biased composition (polar residues); that stretch reads KSPTGKQTSQ. Positions 254–363 constitute a DEUBAD domain; the sequence is PGSILVNTNL…FERFYGEKLG (110 aa). Disordered stretches follow at residues 368–414, 547–583, 607–643, 703–726, 762–853, 869–1052, 1123–1152, 1183–1203, 1431–1462, 1573–1596, and 1990–2068; these read ESVK…PASP, TSSMTHVSDTEHKESETAVETSTPKIKTGSSSLEGQF, CISETSFSSESPEGACTSLPSPGGETQSTSEESCTPA, EASPVSNLPLTSETSPMSDLPLTS, ERMA…ASIP, LQRT…TGAR, TSKETRLPPPLSSKEGPPNLEVSSTPETKM, QQSLNPSKLPETATDLSVHSS, KLSAESLDKNSGPRNRADNSGKPQQPPGGFAP, TAPSHNFAEQARGPAPFKSEADTT, and LSPN…KRLS. Composition is skewed to polar residues over residues 371–389, 395–407, 564–580, 607–617, and 624–643; these read KLTTGPNNAGAQSSSSCGT, SAQTALAEQQPKS, AVETSTPKIKTGSSSLE, CISETSFSSES, and SLPSPGGETQSTSEESCTPA. Polar residues predominate over residues 796–818; the sequence is NLTSQQKNLSNTPEPIIMSSSSI. The span at 937 to 949 shows a compositional bias: low complexity; sequence SHTSKSSEPSKSP. Composition is skewed to basic and acidic residues over residues 950–968, 975–987, and 997–1008; these read DGIRNESRDSEISKRKTAE, CKEKRARIEDDQS, and PEKEQPPREEPR. The segment covering 1036-1046 has biased composition (polar residues); it reads RASTSTSVSGG. Residues 2016–2046 show a composition bias toward pro residues; the sequence is HPPPPPPPPPPPPLALPPPPPPPPPLPPPLP. A PHD-type; atypical zinc finger spans residues 2210 to 2247; that stretch reads ELKCSCRLKAMIVCKGCGAFCHDDCIGPSKLCVACLVV.

It belongs to the Asx family. Core component of the polycomb repressive deubiquitinase (PR-DUB) complex, at least composed of BAP1, one of ASXL1, ASXL2 or (probably) ASXL3, and one of MBD5 or MBD6. Distinct combinations of ASXL and MBD proteins may preferentially bind specific histone modification marks. The PR-DUB core associates with a number of accessory proteins, including FOXK1, FOXK2, KDM1B, HCFC1 and OGT; KDM1B specifically associates with ASXL2 PR-DUB complexes. Interacts (via PHD domain) with MBD5 and MBD6 (via MBD domain); the interaction is probably direct and mediates association of MBD proteins with the PR-DUB core. As to expression, expressed in pancreatic islets, testis, neuroblastoma, head and neck tumor.

It is found in the nucleus. Its function is as follows. Putative Polycomb group (PcG) protein. PcG proteins act by forming multiprotein complexes, which are required to maintain the transcriptionally repressive state of homeotic genes throughout development. PcG proteins are not required to initiate repression, but to maintain it during later stages of development. They probably act via methylation of histones, rendering chromatin heritably changed in its expressibility. Non-catalytic component of the PR-DUB complex, a complex that specifically mediates deubiquitination of histone H2A monoubiquitinated at 'Lys-119' (H2AK119ub1). The PR-DUB complex is an epigenetic regulator of gene expression and acts as a transcriptional coactivator, affecting genes involved in development, cell communication, signaling, cell proliferation and cell viability. ASXL1, ASXL2 and ASXL3 function redundantly in the PR-DUB complex and are essential for chromatin recruitment and transcriptional activation of associated genes. In Homo sapiens (Human), this protein is Putative Polycomb group protein ASXL3 (ASXL3).